A 672-amino-acid chain; its full sequence is PHD finger protein MALE STERILITY 1 (672 aa).

A PHD-type zinc finger spans residues 614–664 (RIECECGATEEDGERMVCCDICEVWQHTRCVGVQHNEEVPRIFLCQSCDQH).

In closed flower buds, especially in anthers.

The protein localises to the nucleus. Its function is as follows. Transcriptional activator required for anther and post-meiotic pollen development and maturation. Seems to regulate inflorescence branching and floral development. May control tapetal development by directly regulating tapetal programmed cell death (PCD) and breakdown. Implicated in pollen cytosolic components and wall development (e.g. exine and intine formation). This is PHD finger protein MALE STERILITY 1 (MS1) from Arabidopsis thaliana (Mouse-ear cress).